Consider the following 740-residue polypeptide: Vacuolar protein sorting-associated protein 51 homolog (740 aa).

Coiled-coil stretches lie at residues 65 to 87 (SATD…VNLL) and 322 to 344 (RALD…LEVQ).

This sequence belongs to the VPS51 family. As to quaternary structure, component of the Golgi-associated retrograde protein (GARP) complex.

May act as a component of the GARP complex that is involved in retrograde transport from early and late endosomes to the trans-Golgi network (TGN). The protein is Vacuolar protein sorting-associated protein 51 homolog of Drosophila melanogaster (Fruit fly).